Reading from the N-terminus, the 375-residue chain is 23S rRNA (uracil(747)-C(5))-methyltransferase RlmC (375 aa).

Positions 3, 11, 14, and 87 each coordinate [4Fe-4S] cluster. Residues Gln-212, Phe-241, Glu-262, and Asn-307 each coordinate S-adenosyl-L-methionine. The Nucleophile role is filled by Cys-334.

This sequence belongs to the class I-like SAM-binding methyltransferase superfamily. RNA M5U methyltransferase family. RlmC subfamily.

The catalysed reaction is uridine(747) in 23S rRNA + S-adenosyl-L-methionine = 5-methyluridine(747) in 23S rRNA + S-adenosyl-L-homocysteine + H(+). Catalyzes the formation of 5-methyl-uridine at position 747 (m5U747) in 23S rRNA. This chain is 23S rRNA (uracil(747)-C(5))-methyltransferase RlmC, found in Escherichia coli O127:H6 (strain E2348/69 / EPEC).